The sequence spans 447 residues: UDP-N-acetylmuramate--L-alanine ligase (447 aa).

An ATP-binding site is contributed by 108 to 114; sequence GSHGKTS.

The protein belongs to the MurCDEF family.

It localises to the cytoplasm. The catalysed reaction is UDP-N-acetyl-alpha-D-muramate + L-alanine + ATP = UDP-N-acetyl-alpha-D-muramoyl-L-alanine + ADP + phosphate + H(+). Its pathway is cell wall biogenesis; peptidoglycan biosynthesis. Cell wall formation. This Listeria monocytogenes serotype 4a (strain HCC23) protein is UDP-N-acetylmuramate--L-alanine ligase.